We begin with the raw amino-acid sequence, 524 residues long: Putative ribose/galactose/methyl galactoside import ATP-binding protein 1 (524 aa).

ABC transporter domains follow at residues 29-270 (LEMR…VGRT) and 280-524 (VPIG…TGGH). ATP is bound at residue 61-68 (GENGAGKS).

Belongs to the ABC transporter superfamily. Carbohydrate importer 2 (CUT2) (TC 3.A.1.2) family.

The protein localises to the cell inner membrane. The catalysed reaction is D-ribose(out) + ATP + H2O = D-ribose(in) + ADP + phosphate + H(+). It catalyses the reaction D-galactose(out) + ATP + H2O = D-galactose(in) + ADP + phosphate + H(+). Its function is as follows. Part of an ABC transporter complex involved in carbohydrate import. Could be involved in ribose, galactose and/or methyl galactoside import. Responsible for energy coupling to the transport system. The polypeptide is Putative ribose/galactose/methyl galactoside import ATP-binding protein 1 (Rhizobium etli (strain ATCC 51251 / DSM 11541 / JCM 21823 / NBRC 15573 / CFN 42)).